Consider the following 155-residue polypeptide: UPF0225 protein PC1_1977 (155 aa).

It belongs to the UPF0225 family.

The chain is UPF0225 protein PC1_1977 from Pectobacterium carotovorum subsp. carotovorum (strain PC1).